Reading from the N-terminus, the 219-residue chain is MKSFVVAPFIVAIDGPAASGKGTLARRIATHYGMPHLDTGLTYRAVAKALLDKGLPLDDEALATDAALSLDLLAMDKAVLSAHAIGEAASKVAVMPAVRRALVEAQRHFANALPSSVLDGRDIGTVVCPDAAIKLFVTASPEVRARRRFDEVLARGDTADFAEILADLKKRDERDMNRTDSPLRPAEDAHLLDASEMSIEAAFLAAKKLIDHALAQHRG.

15 to 23 (GPAASGKGT) provides a ligand contact to ATP.

Belongs to the cytidylate kinase family. Type 1 subfamily.

The protein resides in the cytoplasm. It carries out the reaction CMP + ATP = CDP + ADP. The catalysed reaction is dCMP + ATP = dCDP + ADP. The sequence is that of Cytidylate kinase from Brucella abortus (strain S19).